The chain runs to 859 residues: Mismatch repair endonuclease PMS2 (859 aa).

Positions 45, 70, 109, 110, and 111 each coordinate ATP. Disordered stretches follow at residues 391 to 413 (ELEK…ADEK), 427 to 455 (LHPT…RGVL), and 469 to 555 (RGSQ…KPED). Composition is skewed to basic and acidic residues over residues 427 to 439 (LHPT…RGPE) and 485 to 495 (CMDREKIEKDS). Over residues 512–525 (EVASSFSSDYNVSS) the composition is skewed to polar residues. The Nuclear localization signal signature appears at 574 to 577 (KRFK). The interval 578 to 597 (TEERPSNVNISQRLPGPQST) is disordered. Positions 583 to 597 (SNVNISQRLPGPQST) are enriched in polar residues.

Belongs to the DNA mismatch repair MutL/HexB family. As to quaternary structure, heterodimer of PMS2 and MLH1 (MutL alpha); this interaction is required for the stability of both partners. Forms a ternary complex with MutS alpha (MSH2-MSH6) or MutS beta (MSH2-MSH3). Part of the BRCA1-associated genome surveillance complex (BASC), which contains BRCA1, MSH2, MSH6, MLH1, ATM, BLM, PMS2 and the RAD50-MRE11-NBS1 protein complex. This association could be a dynamic process changing throughout the cell cycle and within subnuclear domains. Interacts with MTMR15/FAN1.

It is found in the nucleus. The enzyme catalyses ATP + H2O = ADP + phosphate + H(+). In terms of biological role, component of the post-replicative DNA mismatch repair system (MMR). Heterodimerizes with MLH1 to form MutL alpha. DNA repair is initiated by MutS alpha (MSH2-MSH6) or MutS beta (MSH2-MSH3) binding to a dsDNA mismatch, then MutL alpha is recruited to the heteroduplex. Assembly of the MutL-MutS-heteroduplex ternary complex in presence of RFC and PCNA is sufficient to activate endonuclease activity of PMS2. It introduces single-strand breaks near the mismatch and thus generates new entry points for the exonuclease EXO1 to degrade the strand containing the mismatch. DNA methylation would prevent cleavage and therefore assure that only the newly mutated DNA strand is going to be corrected. MutL alpha (MLH1-PMS2) interacts physically with the clamp loader subunits of DNA polymerase III, suggesting that it may play a role to recruit the DNA polymerase III to the site of the MMR. Also implicated in DNA damage signaling, a process which induces cell cycle arrest and can lead to apoptosis in case of major DNA damages. Possesses an ATPase activity, but in the absence of gross structural changes, ATP hydrolysis may not be necessary for proficient mismatch repair. In Mus musculus (Mouse), this protein is Mismatch repair endonuclease PMS2.